The following is a 527-amino-acid chain: MGKNWLTCVSVACLSPGKDKKNQKPEKPKRKWSFGKQKSRESFDFPLEETPPVDPSPSSVHRPYPPPPPLPDFAPQPLLPPPSPPPPPPAYTINTRIYGESKESKNRQALALASAVAAEAAVVAAHAAAEVIRLTTPSTPQIEESKEETAAIKIQNAYRCYTARRTLRALRGMARLKSLLQGKYVKRQMNAMLSSMQTLTRLQTQIQERRNRLSAENKTRHRLIQQKGHQKENHQNLVTAGNFDSSNKSKEQIVARSVNRKEASVRRERALAYAYSHQQTWRNSSKLPHQTLMDTNTTDWGWSWLERWMASRPWDAESIDDQVSVKSSLKRENSIKSSPARSKTQKSASQSSIQWPVNNDTKSRKIEVTNRRHSIGGGSSENAKDDESVGSSSSRRNSLDNTQTVKSKVSVETTSNVSNAQTVKPKANVGAKRNLDNTKTLKSKSSVGTTGNLANTEAVKSKVNVGTTSMPKKEVVADKKKPPQMVLPKKRLSSSTSLGKTKKLSDSDKATTGVANGEKKRRNGGSS.

The interval 13–90 is disordered; the sequence is CLSPGKDKKN…PPSPPPPPPA (78 aa). Positions 17-26 are enriched in basic and acidic residues; that stretch reads GKDKKNQKPE. Pro residues predominate over residues 63-90; the sequence is PYPPPPPLPDFAPQPLLPPPSPPPPPPA. Residues 147–175 enclose the IQ domain; the sequence is EETAAIKIQNAYRCYTARRTLRALRGMAR. Positions 256–273 are calmodulin-binding; that stretch reads RSVNRKEASVRRERALAY. Residues 323-527 form a disordered region; sequence VSVKSSLKRE…EKKRRNGGSS (205 aa). A compositionally biased stretch (polar residues) spans 335 to 360; that stretch reads IKSSPARSKTQKSASQSSIQWPVNND. The segment covering 361–370 has biased composition (basic and acidic residues); the sequence is TKSRKIEVTN. Polar residues-rich tracts occupy residues 399–422 and 437–455; these read LDNT…NAQT and NTKT…NLAN. The span at 471 to 481 shows a compositional bias: basic and acidic residues; the sequence is PKKEVVADKKK. Residues 478–485 carry the Nuclear localization signal motif; it reads DKKKPPQM.

Belongs to the IQD family. In terms of assembly, binds to multiple calmodulin (CaM) in the presence of Ca(2+) and CaM-like proteins.

It is found in the nucleus. It localises to the nucleolus. May be involved in cooperative interactions with calmodulins or calmodulin-like proteins. Recruits calmodulin proteins to microtubules, thus being a potential scaffold in cellular signaling and trafficking. May associate with nucleic acids and regulate gene expression at the transcriptional or post-transcriptional level. The sequence is that of Protein IQ-DOMAIN 4 from Arabidopsis thaliana (Mouse-ear cress).